A 134-amino-acid polypeptide reads, in one-letter code: Retinol-binding protein 2 (134 aa).

All-trans-retinol-binding residues include Lys-41 and Gln-109.

It belongs to the calycin superfamily. Fatty-acid binding protein (FABP) family.

It is found in the cytoplasm. In terms of biological role, intracellular transport of retinol. The chain is Retinol-binding protein 2 (RBP2) from Sus scrofa (Pig).